The sequence spans 807 residues: G-type lectin S-receptor-like serine/threonine-protein kinase At1g61420 (807 aa).

An N-terminal signal peptide occupies residues 1 to 24; the sequence is MGKKWIVFFAYLLLSSFFISSSSA. Positions 25–144 constitute a Bulb-type lectin domain; it reads GITKESPLPI…FSGRTLWQSF (120 aa). Over 25-426 the chain is Extracellular; the sequence is GITKESPLPI…ELGGNKRKKA (402 aa). N-linked (GlcNAc...) asparagine glycans are attached at residues N53, N94, N117, N134, N236, and N267. The EGF-like; atypical domain maps to 278 to 314; it reads PEHSCDYYGVCGPFGLCVKSVPPKCTCFKGFVPKLIE. 2 cysteine pairs are disulfide-bonded: C282/C294 and C288/C302. 3 N-linked (GlcNAc...) asparagine glycosylation sites follow: N320, N336, and N375. The 81-residue stretch at 333–413 folds into the PAN domain; sequence CQGNSTGKYA…EGGELLSIRL (81 aa). 2 disulfide bridges follow: C368–C389 and C372–C378. A helical transmembrane segment spans residues 427–447; sequence ITASIVSLSLVVIIAFVAFCF. The Cytoplasmic segment spans residues 448–807; the sequence is WRYRVKHNAD…EMTKSVILGR (360 aa). In terms of domain architecture, Protein kinase spans 494-779; that stretch reads FSISNKLGQG…DLPPPEQPTF (286 aa). Residues 500–508 and K522 contribute to the ATP site; that span reads LGQGGFGPV. Residues S528 and S543 each carry the phosphoserine modification. Positions 583-600 are caM-binding; it reads RKRLEIDWPKRLDIIQGI. D619 serves as the catalytic Proton acceptor. Residues S623 and S636 each carry the phosphoserine modification. Position 653 is a phosphothreonine (T653). Residues S696 and S790 each carry the phosphoserine modification.

Belongs to the protein kinase superfamily. Ser/Thr protein kinase family.

Its subcellular location is the cell membrane. It carries out the reaction L-seryl-[protein] + ATP = O-phospho-L-seryl-[protein] + ADP + H(+). The enzyme catalyses L-threonyl-[protein] + ATP = O-phospho-L-threonyl-[protein] + ADP + H(+). The polypeptide is G-type lectin S-receptor-like serine/threonine-protein kinase At1g61420 (Arabidopsis thaliana (Mouse-ear cress)).